The chain runs to 305 residues: Superkiller complex protein 8 (305 aa).

7 WD repeats span residues 14–57 (AHED…LELQ), 62–101 (GHQL…QIRA), 104–143 (AGPV…KEYS), 146–187 (TRGK…HTLE), 188–227 (GHAM…LAAT), 230–269 (GHGS…CVHT), and 272–305 (DHQD…DCPI).

Belongs to the SKI8 family. In terms of assembly, component of the PAF1 complex. Component of the SKI complex.

Its subcellular location is the nucleus. The protein resides in the cytoplasm. In terms of biological role, component of the PAF1 complex (PAF1C) which has multiple functions during transcription by RNA polymerase II and is implicated in regulation of development and maintenance of embryonic stem cell pluripotency. PAF1C associates with RNA polymerase II through interaction with POLR2A CTD non-phosphorylated and 'Ser-2'- and 'Ser-5'-phosphorylated forms and is involved in transcriptional elongation, acting both independently and synergistically with TCEA1 and in cooperation with the DSIF complex and HTATSF1. Also acts as a component of the SKI complex, a multiprotein complex that assists the RNA-degrading exosome during the mRNA decay and quality-control pathways. The SKI complex catalyzes mRNA extraction from 80S ribosomal complexes in the 3'-5' direction and channels mRNA to the cytosolic exosome for degradation. This Xenopus tropicalis (Western clawed frog) protein is Superkiller complex protein 8 (skic8).